Consider the following 91-residue polypeptide: UPF0250 protein HCH_05838 (91 aa).

The protein belongs to the UPF0250 family.

In Hahella chejuensis (strain KCTC 2396), this protein is UPF0250 protein HCH_05838.